A 62-amino-acid polypeptide reads, in one-letter code: Large ribosomal subunit protein bL33 (62 aa).

The protein belongs to the bacterial ribosomal protein bL33 family.

The polypeptide is Large ribosomal subunit protein bL33 (Trichodesmium erythraeum (strain IMS101)).